The following is a 244-amino-acid chain: Ribosomal RNA large subunit methyltransferase E (244 aa).

Positions 1–23 (MATGGKKSAGRTTGSGPAGGSRN) are disordered. S-adenosyl-L-methionine-binding residues include G91, W93, D116, D132, and D156. Residue K196 is the Proton acceptor of the active site.

Belongs to the class I-like SAM-binding methyltransferase superfamily. RNA methyltransferase RlmE family.

The protein resides in the cytoplasm. It carries out the reaction uridine(2552) in 23S rRNA + S-adenosyl-L-methionine = 2'-O-methyluridine(2552) in 23S rRNA + S-adenosyl-L-homocysteine + H(+). Its function is as follows. Specifically methylates the uridine in position 2552 of 23S rRNA at the 2'-O position of the ribose in the fully assembled 50S ribosomal subunit. In Paramagnetospirillum magneticum (strain ATCC 700264 / AMB-1) (Magnetospirillum magneticum), this protein is Ribosomal RNA large subunit methyltransferase E.